Here is a 143-residue protein sequence, read N- to C-terminus: EKC/KEOPS complex subunit LAGE3 (143 aa).

A disordered region spans residues 1-57 (MRDADADAGGGADGGDGRGGHSCRGGVDTAAAPAGGAPPAHAPGPGRDAASAARGSR). Low complexity predominate over residues 30–55 (AAAPAGGAPPAHAPGPGRDAASAARG).

This sequence belongs to the CTAG/PCC1 family. As to quaternary structure, component of the EKC/KEOPS complex composed of at least GON7, TP53RK, TPRKB, OSGEP and LAGE3; the whole complex dimerizes. Ubiquitous.

The protein resides in the cytoplasm. It localises to the nucleus. Component of the EKC/KEOPS complex that is required for the formation of a threonylcarbamoyl group on adenosine at position 37 (t(6)A37) in tRNAs that read codons beginning with adenine. The complex is probably involved in the transfer of the threonylcarbamoyl moiety of threonylcarbamoyl-AMP (TC-AMP) to the N6 group of A37. LAGE3 functions as a dimerization module for the complex. This Homo sapiens (Human) protein is EKC/KEOPS complex subunit LAGE3.